A 327-amino-acid polypeptide reads, in one-letter code: MIQTMSDTTEPTRHVSVLPVETLAALDPRAGGRYLDGTLGMGGHASAILSSAPGIELCGLDRDEEALALAGQRLSSFGGRAHLFHCRYSDFAEALNELGWDKVDGALLDIGVSSLQLDEAERGFSFYGDGPLDMRMDQNSAQPSAWHWVNRESFDKLKDCIATLGEEPQAGRIARAIVDARQKNTIDTTGQLAALVERAYPAAWRAKARRHPATRTFQALRMAVNDELGELRRFLDQILTWLPIGGRLAVITFHSLEDRMVKQAMRHWVEGCRCPRHIPRCICGHQPEVRILHKKPVQAGPEELAANSRAGSAKLRAVEKIAEDSGS.

Residues 42 to 44, Asp61, Leu95, Asp109, and Gln116 each bind S-adenosyl-L-methionine; that span reads GGH.

It belongs to the methyltransferase superfamily. RsmH family.

The protein resides in the cytoplasm. It catalyses the reaction cytidine(1402) in 16S rRNA + S-adenosyl-L-methionine = N(4)-methylcytidine(1402) in 16S rRNA + S-adenosyl-L-homocysteine + H(+). In terms of biological role, specifically methylates the N4 position of cytidine in position 1402 (C1402) of 16S rRNA. The protein is Ribosomal RNA small subunit methyltransferase H of Desulfovibrio desulfuricans (strain ATCC 27774 / DSM 6949 / MB).